The sequence spans 371 residues: Ligninase LG2 (371 aa).

The N-terminal stretch at methionine 1–alanine 21 is a signal peptide. Positions alanine 22–arginine 28 are excised as a propeptide. Intrachain disulfides connect cysteine 31–cysteine 43, cysteine 42–cysteine 313, cysteine 62–cysteine 148, and cysteine 277–cysteine 345. The active-site Proton acceptor is the histidine 75. Positions 76, 94, 96, and 98 each coordinate Ca(2+). Tryptophan 199 carries the 3-hydroxytryptophan modification. Histidine 204 contributes to the heme b binding site. Positions 205, 222, 224, 227, and 229 each coordinate Ca(2+). N-linked (GlcNAc...) asparagine glycosylation is present at asparagine 285.

This sequence belongs to the peroxidase family. Ligninase subfamily. Requires Ca(2+) as cofactor. Heme b is required as a cofactor.

The catalysed reaction is 1-(3,4-dimethoxyphenyl)-2-(2-methoxyphenoxy)propane-1,3-diol + H2O2 = 3,4-dimethoxybenzaldehyde + guaiacol + glycolaldehyde + H2O. The enzyme catalyses 2 (3,4-dimethoxyphenyl)methanol + H2O2 = 2 (3,4-dimethoxyphenyl)methanol radical + 2 H2O. The protein operates within secondary metabolite metabolism; lignin degradation. In terms of biological role, depolymerization of lignin. Catalyzes the C(alpha)-C(beta) cleavage of the propyl side chains of lignin. This chain is Ligninase LG2 (GLG2), found in Phanerodontia chrysosporium (White-rot fungus).